The sequence spans 457 residues: MEISIKNIFEKADFYLGKKIIVNGWIRNCRFQKKLIFIELNDGTFLENFQIVYKNVDLEKIKDILQIGTSLKVEGFLKKNEKQEKNLEILAQNITLLGSSDFSYPIQPKKHSKSFLRTIPHLRTRTKLFGAVFRIRSTAFFALHHFFHKKGFFHINTPIITPNDGEGAGELFQLTSLNLERLSQEKPSTINYQKDFFGKKVFLTVTGQLEAEAMALALNKVYTFGPTFRAEKSNTPRHAAEFWMLEPEMAFCDLKQNLKVAQEMLQEVVVQCLQENQKDIEFLDQTVRNGLLQELKNVVQEKEFLVITYQKAIEILASSGVAFENKVFYGSDLATEHEKFLTEKHFQKPVFIIDWPKEIKAFYMKNNPDQKTVAAMDLLIPRVGELIGGSQREENLAVLIEKMQQMKIPQKEFEWYLDLRRFGSCIHSGFGLGFERLLLFLTGLDNIRDVIAFPRTY.

This sequence belongs to the class-II aminoacyl-tRNA synthetase family. In terms of assembly, homodimer.

It localises to the cytoplasm. The enzyme catalyses tRNA(Asn) + L-asparagine + ATP = L-asparaginyl-tRNA(Asn) + AMP + diphosphate + H(+). The protein is Asparagine--tRNA ligase of Phytoplasma australiense.